The sequence spans 743 residues: tRNA(Met) cytidine acetyltransferase TmcA (743 aa).

Residues Gln-216, 241 to 250 (GRGKSASIGL), and Arg-390 each bind ATP. In terms of domain architecture, N-acetyltransferase spans 420–604 (LKIEDVSQEE…YSVIVIRALS (185 aa)). Residues 531–533 (IAV) and 538–544 (QGKGIGS) each bind acetyl-CoA.

It belongs to the RNA cytidine acetyltransferase family. TmcA subfamily.

The protein localises to the cytoplasm. It carries out the reaction cytidine(34) in elongator tRNA(Met) + acetyl-CoA + ATP + H2O = N(4)-acetylcytidine(34) in elongator tRNA(Met) + ADP + phosphate + CoA + H(+). Functionally, catalyzes the formation of N(4)-acetylcytidine (ac(4)C) at the wobble position of tRNA(Met), by using acetyl-CoA as an acetyl donor and ATP (or GTP). This is tRNA(Met) cytidine acetyltransferase TmcA from Saccharolobus islandicus (strain Y.G.57.14 / Yellowstone #1) (Sulfolobus islandicus).